Here is a 491-residue protein sequence, read N- to C-terminus: Protein nucleotidyltransferase YdiU (491 aa).

ATP contacts are provided by Gly94, Gly96, Arg97, Lys117, Asp129, Gly130, Arg180, and Arg187. Asp256 acts as the Proton acceptor in catalysis. Residues Asn257 and Asp266 each contribute to the Mg(2+) site. Residue Asp266 coordinates ATP.

Belongs to the SELO family. Requires Mg(2+) as cofactor. Mn(2+) serves as cofactor.

It catalyses the reaction L-seryl-[protein] + ATP = 3-O-(5'-adenylyl)-L-seryl-[protein] + diphosphate. The enzyme catalyses L-threonyl-[protein] + ATP = 3-O-(5'-adenylyl)-L-threonyl-[protein] + diphosphate. It carries out the reaction L-tyrosyl-[protein] + ATP = O-(5'-adenylyl)-L-tyrosyl-[protein] + diphosphate. The catalysed reaction is L-histidyl-[protein] + UTP = N(tele)-(5'-uridylyl)-L-histidyl-[protein] + diphosphate. It catalyses the reaction L-seryl-[protein] + UTP = O-(5'-uridylyl)-L-seryl-[protein] + diphosphate. The enzyme catalyses L-tyrosyl-[protein] + UTP = O-(5'-uridylyl)-L-tyrosyl-[protein] + diphosphate. Its function is as follows. Nucleotidyltransferase involved in the post-translational modification of proteins. It can catalyze the addition of adenosine monophosphate (AMP) or uridine monophosphate (UMP) to a protein, resulting in modifications known as AMPylation and UMPylation. The protein is Protein nucleotidyltransferase YdiU of Alkaliphilus metalliredigens (strain QYMF).